The primary structure comprises 333 residues: Nucleoid-associated protein PSPTO_1265 (333 aa).

Belongs to the YejK family.

The protein localises to the cytoplasm. It localises to the nucleoid. The protein is Nucleoid-associated protein PSPTO_1265 of Pseudomonas syringae pv. tomato (strain ATCC BAA-871 / DC3000).